Reading from the N-terminus, the 179-residue chain is ATP synthase subunit b (179 aa).

The chain crosses the membrane as a helical span at residues 27 to 47; that stretch reads TAITFLVMLVVLGKFAWGPIV.

The protein belongs to the ATPase B chain family. As to quaternary structure, F-type ATPases have 2 components, F(1) - the catalytic core - and F(0) - the membrane proton channel. F(1) has five subunits: alpha(3), beta(3), gamma(1), delta(1), epsilon(1). F(0) has three main subunits: a(1), b(2) and c(10-14). The alpha and beta chains form an alternating ring which encloses part of the gamma chain. F(1) is attached to F(0) by a central stalk formed by the gamma and epsilon chains, while a peripheral stalk is formed by the delta and b chains.

The protein resides in the cell inner membrane. Its function is as follows. F(1)F(0) ATP synthase produces ATP from ADP in the presence of a proton or sodium gradient. F-type ATPases consist of two structural domains, F(1) containing the extramembraneous catalytic core and F(0) containing the membrane proton channel, linked together by a central stalk and a peripheral stalk. During catalysis, ATP synthesis in the catalytic domain of F(1) is coupled via a rotary mechanism of the central stalk subunits to proton translocation. Functionally, component of the F(0) channel, it forms part of the peripheral stalk, linking F(1) to F(0). The protein is ATP synthase subunit b of Anaeromyxobacter sp. (strain K).